Consider the following 375-residue polypeptide: Anhydro-N-acetylmuramic acid kinase (375 aa).

18-25 serves as a coordination point for ATP; it reads GTSMDGID.

Belongs to the anhydro-N-acetylmuramic acid kinase family.

The enzyme catalyses 1,6-anhydro-N-acetyl-beta-muramate + ATP + H2O = N-acetyl-D-muramate 6-phosphate + ADP + H(+). It participates in amino-sugar metabolism; 1,6-anhydro-N-acetylmuramate degradation. The protein operates within cell wall biogenesis; peptidoglycan recycling. Functionally, catalyzes the specific phosphorylation of 1,6-anhydro-N-acetylmuramic acid (anhMurNAc) with the simultaneous cleavage of the 1,6-anhydro ring, generating MurNAc-6-P. Is required for the utilization of anhMurNAc either imported from the medium or derived from its own cell wall murein, and thus plays a role in cell wall recycling. The chain is Anhydro-N-acetylmuramic acid kinase from Rhodospirillum rubrum (strain ATCC 11170 / ATH 1.1.1 / DSM 467 / LMG 4362 / NCIMB 8255 / S1).